The sequence spans 366 residues: BIIDXI-like protein At5g11420 (366 aa).

An N-terminal signal peptide occupies residues 1 to 22 (MKGGSLSFLFVLLIATITSVIC). Residues N98, N122, and N209 are each glycosylated (N-linked (GlcNAc...) asparagine).

In terms of assembly, interacts with PME3.

It is found in the secreted. The protein localises to the cell wall. Its function is as follows. Together with BIIDXI, acts as a positive regulator of PME3 activity during several developmental processes, including seed germination and endosperm (testa) rupture at the micropyle, probably by modulating the pectin status in cell walls. In Arabidopsis thaliana (Mouse-ear cress), this protein is BIIDXI-like protein At5g11420.